Reading from the N-terminus, the 109-residue chain is CRISPR-associated endoribonuclease Cas2 (109 aa).

Aspartate 8 lines the Mg(2+) pocket.

This sequence belongs to the CRISPR-associated endoribonuclease Cas2 protein family. As to quaternary structure, homodimer, forms a heterotetramer with a Cas1 homodimer. Mg(2+) is required as a cofactor.

In terms of biological role, CRISPR (clustered regularly interspaced short palindromic repeat), is an adaptive immune system that provides protection against mobile genetic elements (viruses, transposable elements and conjugative plasmids). CRISPR clusters contain sequences complementary to antecedent mobile elements and target invading nucleic acids. CRISPR clusters are transcribed and processed into CRISPR RNA (crRNA). Functions as a ssRNA-specific endoribonuclease. Involved in the integration of spacer DNA into the CRISPR cassette. In Streptococcus mutans serotype c (strain ATCC 700610 / UA159), this protein is CRISPR-associated endoribonuclease Cas2.